Reading from the N-terminus, the 1173-residue chain is Protein GIGANTEA (1173 aa).

Disordered stretches follow at residues 150–187 (EQQN…RKPL), 604–641 (SGSK…NVKG), and 840–863 (SRTE…SGRP). Polar residues-rich tracts occupy residues 162–172 (SKATTSGSPTS) and 613–633 (YAST…QTAN). Positions 854-863 (RHSDEGSGRP) are enriched in basic and acidic residues.

It belongs to the GIGANTEA family. As to quaternary structure, interacts with SPY. Interacts with ADO1 (via N-terminus) and ADO2. Interacts with ADO3 (via N-terminus). Interacts (via N-terminus) with CDF1. Interacts (via N-terminus) with TCP4. In terms of tissue distribution, widely expressed with highest levels in inflorescence apices, young flowers and young siliques.

It localises to the nucleus. Its subcellular location is the cytoplasm. Its function is as follows. Involved in regulation of circadian rhythm and photoperiodic flowering. May play a role in maintenance of circadian amplitude and period length. Is involved in phytochrome B signaling. Stabilizes ADO3 and the circadian photoreceptor ADO1/ZTL. Regulates 'CONSTANS' (CO) in the long-day flowering pathway by modulating the ADO3-dependent protein stability of CDF1 and CDF2, but is not essential to activate CO transcription. Regulates, via the microRNA miR172, a CO-independent pathway that promotes photoperiodic flowering by inducing 'FLOWERING LOCUS T'. In Arabidopsis thaliana (Mouse-ear cress), this protein is Protein GIGANTEA (GI).